The primary structure comprises 163 residues: MSKESSFDIVSKVDLSEVTNAINIALKEIKNRYDFKGSKSDISLDKDELVLISDDEFKLEQLKDVLIGKLIRRGVPTKNIQYGKIEPAAGGTVRQRAKLVQGIDKENAKKINTIIKNTGLKVKSQVQDDQIRVSGKSKDDLQKVIAAIREADLPIDVQFVNYR.

This sequence belongs to the YajQ family.

In terms of biological role, nucleotide-binding protein. The protein is Nucleotide-binding protein GWCH70_0711 of Geobacillus sp. (strain WCH70).